A 174-amino-acid chain; its full sequence is MSTRKLNMLTPEPIHLLEEGGDNSEEFVVDEGCQVQRIYVGDGSITTSDEAKFTIWKVTTELIVHKVEPVRVSIPLEIVSYRRYSEFDQLRAEIISKIGKNVQVPELPPKVYWYDYWRFSKINLNRHWLNKRRQGLDNFINKIIKNKDIMESCAKEVNEFLGVSSDVSTRTNSE.

One can recognise a PX domain in the interval 34-168; that stretch reads QVQRIYVGDG…EFLGVSSDVS (135 aa).

The protein belongs to the YPT35 family.

The protein localises to the endosome membrane. The protein resides in the vacuole membrane. Functionally, recruits the lipid transfer protein VPS13 to endosomal and vacuolar membranes. The protein is Endosomal/vacuolar adapter protein YPT35 (YPT35) of Vanderwaltozyma polyspora (strain ATCC 22028 / DSM 70294 / BCRC 21397 / CBS 2163 / NBRC 10782 / NRRL Y-8283 / UCD 57-17) (Kluyveromyces polysporus).